Here is a 946-residue protein sequence, read N- to C-terminus: Serine/threonine-protein kinase PLK4 (946 aa).

Residues 12–265 enclose the Protein kinase domain; sequence FKVLNLLGKG…LSSVLDHAFM (254 aa). Residues 18 to 26 and lysine 41 contribute to the ATP site; that span reads LGKGSFACV. Catalysis depends on aspartate 136, which acts as the Proton acceptor. The interval 330–395 is disordered; it reads HPAERSNGGS…TYGKPSSFSE (66 aa). Residues 378–394 show a composition bias toward polar residues; sequence RSGTSQSQTYGKPSSFS. Positions 566-679 constitute a Cryptic POLO box 1 (CPB1) domain; that stretch reads TLRSIISPLN…AKFIQLVRSK (114 aa). Residues 680–792 enclose the Cryptic POLO box 2 (CPB2) domain; it reads MPKVTYYTRY…GRRPAITESP (113 aa). The interval 789–828 is disordered; sequence TESPRTQLTVDSARERKDEQSSANRVLHSSATSPPQIPNI. The span at 809 to 828 shows a compositional bias: polar residues; that stretch reads SSANRVLHSSATSPPQIPNI. The POLO box domain maps to 864–942; it reads QVLKSVFVEN…LSSILMLFAS (79 aa).

The protein belongs to the protein kinase superfamily. Ser/Thr protein kinase family. CDC5/Polo subfamily. Homodimer. In terms of processing, ubiquitinated; leading to its degradation by the proteasome.

The protein localises to the cytoplasm. It is found in the cytoskeleton. Its subcellular location is the microtubule organizing center. The protein resides in the centrosome. It localises to the centriole. It catalyses the reaction L-seryl-[protein] + ATP = O-phospho-L-seryl-[protein] + ADP + H(+). It carries out the reaction L-threonyl-[protein] + ATP = O-phospho-L-threonyl-[protein] + ADP + H(+). Functionally, serine/threonine-protein kinase that plays a central role in centriole duplication. Able to trigger procentriole formation on the surface of the parental centriole cylinder, leading to the recruitment of centriole biogenesis proteins such as sass6, cpap, ccp110, cep135 and gamma-tubulin. When overexpressed, it is able to induce centrosome amplification through the simultaneous generation of multiple procentrioles adjoining each parental centriole during S phase. Its central role in centriole replication suggests a possible role in tumorigenesis, centrosome aberrations being frequently observed in tumors. Also involved in deuterosome-mediated centriole amplification in multiciliated that can generate more than 100 centrioles. This Xenopus tropicalis (Western clawed frog) protein is Serine/threonine-protein kinase PLK4.